A 79-amino-acid polypeptide reads, in one-letter code: Cell division protein ZapB (79 aa).

Residues 4–78 adopt a coiled-coil conformation; that stretch reads EVFEKLESKV…LRALLGKMEE (75 aa).

It belongs to the ZapB family. Homodimer. The ends of the coiled-coil dimer bind to each other, forming polymers. Interacts with FtsZ.

It localises to the cytoplasm. Non-essential, abundant cell division factor that is required for proper Z-ring formation. It is recruited early to the divisome by direct interaction with FtsZ, stimulating Z-ring assembly and thereby promoting cell division earlier in the cell cycle. Its recruitment to the Z-ring requires functional FtsA or ZipA. The polypeptide is Cell division protein ZapB (Serratia proteamaculans (strain 568)).